Consider the following 166-residue polypeptide: Ubiquitin-conjugating enzyme E2-18 kDa (166 aa).

One can recognise a UBC core domain in the interval 5 to 165 (MALRRLMKEY…VRRLARKTLG (161 aa)). Catalysis depends on Cys-90, which acts as the Glycyl thioester intermediate. Cys-90 is covalently cross-linked (Glycyl cysteine thioester (Cys-Gly) (interchain with G-Cter in ubiquitin)).

Belongs to the ubiquitin-conjugating enzyme family. Post-translationally, autoubiquitinated at Cys-90; undergoes 'Lys-48'-linked polyubiquitination, which leads to proteasome-dependent protein degradation.

The enzyme catalyses S-ubiquitinyl-[E1 ubiquitin-activating enzyme]-L-cysteine + [E2 ubiquitin-conjugating enzyme]-L-cysteine = [E1 ubiquitin-activating enzyme]-L-cysteine + S-ubiquitinyl-[E2 ubiquitin-conjugating enzyme]-L-cysteine.. Its pathway is protein modification; protein ubiquitination. Functionally, catalyzes the covalent attachment of ubiquitin to other proteins. Functions in degradation of misfolded or regulated proteins localized in the endoplasmic reticulum (ER) lumen or membrane via the ubiquitin-proteasome system. Cognate E2 conjugating enzyme for the doa10 ubiquitin ligase complex, which is part of the ERAD-C pathway responsible for the rapid degradation of membrane proteins with misfolded cytoplasmic domains, and of the hrd1 ubiquitin ligase complex, which is part of the ERAD-L and ERAD-M pathways responsible for the rapid degradation of soluble lumenal and membrane proteins with misfolded lumenal domains (ERAD-L), or ER-membrane proteins with misfolded transmembrane domains (ERAD-M). Together with hrd1, required for the degradation of the transcription factor sre1 precursor in the absence of its binding partner scp1. Has a role in the formation of chromatin structures that influence the localization of transcriptional silencing factors. The sequence is that of Ubiquitin-conjugating enzyme E2-18 kDa (ubc7) from Schizosaccharomyces pombe (strain 972 / ATCC 24843) (Fission yeast).